The primary structure comprises 141 residues: Large ribosomal subunit protein uL11 (141 aa).

Belongs to the universal ribosomal protein uL11 family. In terms of assembly, part of the ribosomal stalk of the 50S ribosomal subunit. Interacts with L10 and the large rRNA to form the base of the stalk. L10 forms an elongated spine to which L12 dimers bind in a sequential fashion forming a multimeric L10(L12)X complex. In terms of processing, one or more lysine residues are methylated.

Forms part of the ribosomal stalk which helps the ribosome interact with GTP-bound translation factors. The polypeptide is Large ribosomal subunit protein uL11 (Streptococcus equi subsp. equi (strain 4047)).